Consider the following 96-residue polypeptide: Teretoxin Tgu6.1 (96 aa).

Positions 1–16 (MRPFLVFVLIVSVSLA) are cleaved as a signal peptide. Positions 17–52 (FSFEDMPNKGGDSVASITADQARGHKRNPLFPFAQR) are excised as a propeptide.

Post-translationally, contains 3 disulfide bonds. In terms of tissue distribution, expressed by the venom duct.

It is found in the secreted. The recombinant protein causes paralysis to polychaete worms (Nereis virens), the natural prey of terebrid snails. This chain is Teretoxin Tgu6.1, found in Terebra guttata (White spotted auger snail).